Consider the following 678-residue polypeptide: ABC transporter F family member 2 (678 aa).

ABC transporter domains lie at Val84–Tyr342 and Val411–Leu626. ATP is bound by residues Gly116–Thr123 and Gly443–Ser450. Positions Ala630–Asn678 are disordered. Residues Arg653 to Asn678 show a composition bias toward basic residues.

Belongs to the ABC transporter superfamily. ABCF family. EF3 (TC 3.A.1.121) subfamily.

The polypeptide is ABC transporter F family member 2 (ABCF2) (Arabidopsis thaliana (Mouse-ear cress)).